The following is a 560-amino-acid chain: Glutamine--tRNA ligase (560 aa).

The 'HIGH' region signature appears at 36 to 46 (PEPNGFAHIGH). Residues 37 to 39 (EPN) and 43 to 49 (HIGHAKA) each bind ATP. Positions 69 and 214 each coordinate L-glutamine. 263–264 (RL) is an ATP binding site. Positions 270–274 (LTSKR) match the 'KMSKS' region motif.

Belongs to the class-I aminoacyl-tRNA synthetase family. In terms of assembly, monomer.

Its subcellular location is the cytoplasm. The enzyme catalyses tRNA(Gln) + L-glutamine + ATP = L-glutaminyl-tRNA(Gln) + AMP + diphosphate. This Chromobacterium violaceum (strain ATCC 12472 / DSM 30191 / JCM 1249 / CCUG 213 / NBRC 12614 / NCIMB 9131 / NCTC 9757 / MK) protein is Glutamine--tRNA ligase.